A 24-amino-acid polypeptide reads, in one-letter code: Metallothionein (24 aa).

Positions 3, 5, 8, 10, 17, 19, and 22 each coordinate Cd(2+).

It belongs to the metallothionein superfamily. Type 8 family. Post-translationally, contains 4 disulfide bonds.

Metallothioneins have a high content of cysteine residues that bind various heavy metals. The chain is Metallothionein from Neonectria lugdunensis (Aquatic fungus).